The primary structure comprises 2909 residues: Micronemal protein 15 (2909 aa).

The first 29 residues, 1-29 (MVFRATREPFRLPLVAAFIALFLLKGVTC), serve as a signal peptide directing secretion. Residues Asn512, Asn563, Asn792, Asn813, Asn986, Asn1007, Asn1057, Asn1142, Asn1319, Asn1395, and Asn1713 are each glycosylated (N-linked (GlcNAc...) asparagine). The TSP type-1 1 domain occupies 1755-1811 (TAIVGEWGEWSACTGTCFSQWWTPKRTRTRLVLAELSHSQIPSVSETATCLDLPPCG). Positions 1937-2073 (RRKGIMSRRR…RSQARNQTPD (137 aa)) are disordered. Positions 1967-1977 (SEQSGKASQNG) are enriched in polar residues. Residue Asn1976 is glycosylated (N-linked (GlcNAc...) asparagine). Basic residues predominate over residues 1978 to 1988 (SRRHRASRKQK). Polar residues predominate over residues 2004-2016 (GESTLHGTGTNAY). A compositionally biased stretch (basic residues) spans 2049-2065 (KARRARRGAGRFRKSRS). N-linked (GlcNAc...) asparagine glycosylation occurs at Asn2333. One can recognise a TSP type-1 2 domain in the interval 2484–2549 (TCDYTEWSEW…EKCDWMPVCP (66 aa)). 3 disulfide bridges follow: Cys2485–Cys2528, Cys2496–Cys2500, and Cys2542–Cys2548. The disordered stretch occupies residues 2552-2587 (EGEEEDDATGGVEPRGEPIVPPWSPERPTDENNQAM). Residue Asn2706 is glycosylated (N-linked (GlcNAc...) asparagine). A helical transmembrane segment spans residues 2709–2729 (TWVICLLLGVGGGICFVLSCV). Residues Asn2751, Asn2768, and Asn2793 are each glycosylated (N-linked (GlcNAc...) asparagine). The tract at residues 2759 to 2846 (ESHKLRRQGN…IGQTSPTQQR (88 aa)) is disordered. Residues 2801 to 2815 (PEEEPWQFEDRDEEP) show a composition bias toward acidic residues. A compositionally biased stretch (polar residues) spans 2837–2846 (IGQTSPTQQR).

Component of a complex, at least composed of cysteine repeat modular protein A (CRMPa), cysteine repeat modular protein B (CRMPb), micronemal protein 15 (MIC15) and thrombospondin type 1 domain-containing protein (TSP1).

It localises to the membrane. Functionally, required for rhoptry secretion. Plays a role in host cell invasion. This is Micronemal protein 15 from Toxoplasma gondii.